Here is a 533-residue protein sequence, read N- to C-terminus: Undecaprenyl phosphate-alpha-4-amino-4-deoxy-L-arabinose arabinosyl transferase (533 aa).

Transmembrane regions (helical) follow at residues 10-30 (LLLAAFLLAYLLPLGFHGLWI), 64-84 (PAGYWLIALGQAVFGENLFGV), 86-106 (IASAISTGLSVLLAYLLAGKI), 113-133 (SFASALLFMSFGFVAGQAGYS), 137-157 (PQFTLWTNLTLVAFWYAVHSI), 170-190 (VACGMGFMTKGFLAWALPAII), 207-227 (FGPLAVVIAIAVCLPWALAVH), 257-277 (WWFYLPLLIAACLPWALLLPV), 290-310 (DTAFLLLWLVLPLAFLSLSKG), 312-332 (LPTYILPCLLPLALLMADALV), 345-365 (VNGIVNAALTFLGLLALIYVQ), 377-397 (HLLLAVIVLTGWTLTNALQGI), and 402-422 (FWALPAVGSWLLIVLLPAALP).

This sequence belongs to the glycosyltransferase 83 family.

It is found in the cell inner membrane. It catalyses the reaction 4-amino-4-deoxy-alpha-L-arabinopyranosyl di-trans,octa-cis-undecaprenyl phosphate + lipid IVA = lipid IIA + di-trans,octa-cis-undecaprenyl phosphate.. The protein operates within lipopolysaccharide metabolism; 4-amino-4-deoxy-beta-L-arabinose-lipid A biosynthesis. Its function is as follows. Catalyzes the transfer of the L-Ara4N moiety of the glycolipid undecaprenyl phosphate-alpha-L-Ara4N to lipid A. The modified arabinose is attached to lipid A and is required for resistance to polymyxin and cationic antimicrobial peptides. The chain is Undecaprenyl phosphate-alpha-4-amino-4-deoxy-L-arabinose arabinosyl transferase from Pseudomonas savastanoi pv. phaseolicola (strain 1448A / Race 6) (Pseudomonas syringae pv. phaseolicola (strain 1448A / Race 6)).